The sequence spans 417 residues: XO lethal protein 1 (417 aa).

The interval 373-417 (VSPGETSSEGISDEHHYEEYDEDDIMEEEEAPSARQDDTYDEDEE) is disordered. The segment covering 391-403 (EYDEDDIMEEEEA) has biased composition (acidic residues).

Belongs to the GHMP kinase family. Xol-1 subfamily.

It is found in the nucleus. Sex-determining factor that is required for sexual differentiation and X chromosome dosage compensation to promote male development. High expression during gastrulation triggers male development, while low expression at that time triggers hermaphrodite development. Although related to GHMP kinase, its mode of action remains unclear. The polypeptide is XO lethal protein 1 (Caenorhabditis elegans).